The following is a 682-amino-acid chain: DNA-directed RNA polymerase subunit beta' (682 aa).

The Zn(2+) site is built by Cys69, Cys71, Cys87, and Cys90. Residues Asp489, Asp491, and Asp493 each coordinate Mg(2+).

This sequence belongs to the RNA polymerase beta' chain family. RpoC1 subfamily. In plastids the minimal PEP RNA polymerase catalytic core is composed of four subunits: alpha, beta, beta', and beta''. When a (nuclear-encoded) sigma factor is associated with the core the holoenzyme is formed, which can initiate transcription. It depends on Mg(2+) as a cofactor. Zn(2+) is required as a cofactor.

Its subcellular location is the plastid. It is found in the chloroplast. It catalyses the reaction RNA(n) + a ribonucleoside 5'-triphosphate = RNA(n+1) + diphosphate. Its function is as follows. DNA-dependent RNA polymerase catalyzes the transcription of DNA into RNA using the four ribonucleoside triphosphates as substrates. The polypeptide is DNA-directed RNA polymerase subunit beta' (Acorus calamus var. americanus (American sweet flag)).